The following is a 607-amino-acid chain: MESRAYPLNLTLKEEQKEEEVEIQELEDGPIDMQKVQICSEGAWVPALFDEVAIYFSDEEWEVLTEQQKALYREVMRMNYETVLSLEFPFPKPDMINRLERDEECPNSDEWRLQGVTFAENEESDFRTPDWASPTNATSHFPQPQPFNSFGLRLPQDITELPEWTEGYPFYMAMGFPGYDLSADDLASKFQFSRGMRRSYDAGFKLMVVEYAESTNNCQAAKQFGVLEKNVRDWRKVKPQLQNAHAMRRAFRGPKNGRFALVDQRVAEYVRYMQAKGDPITREAMQLKALEIAQEMNIPEKGFKASLGWCRRMMRRYDLSLRHKVPVPQHLAEDLTEKLVTYQQSVLALRRTHDYEVAQMGNADETPICLEVPSRVTVDNQGEKPILVKTPGREKLRITAMLGVLADGRKLPPYIILRGTYIPPGKFPSGMEIRCHRYGWMTEDLMQDWLEVVWRRRTGAVPRQRGMLILNGFRCHATDSVKSSMENMNTDMVIIPGGLTSQLQVLDVVVYKPLNDSVRAQYSNWLLAGNLALSPTGNAKKPPLGLFLEWIMVAWNSISSESIVQGFRKCHISSNLEDEGDVLWEIEGELPKEPPKECGPESVAEGD.

The stretch at Leu-8–Gly-29 forms a coiled coil. Residue Lys-13 forms a Glycyl lysine isopeptide (Lys-Gly) (interchain with G-Cter in SUMO2) linkage. One can recognise a KRAB domain in the interval Ala-47–Phe-118. An HTH CENPB-type domain is found at Ala-250–His-323. Residues Tyr-355 to Phe-567 form the DDE-1 domain. Residue Lys-384 forms a Glycyl lysine isopeptide (Lys-Gly) (interchain with G-Cter in SUMO2) linkage. A disordered region spans residues Gly-588 to Asp-607. Positions Glu-589–Gly-599 are enriched in basic and acidic residues.

The protein localises to the nucleus. This chain is Pogo transposable element with KRAB domain (Pogk), found in Mus musculus (Mouse).